A 596-amino-acid polypeptide reads, in one-letter code: Elongation factor 4 (596 aa).

The region spanning 2–184 is the tr-type G domain; the sequence is RNIRNFSIIA…AIVHRIPPPK (183 aa). GTP is bound by residues 14–19 and 131–134; these read DHGKST and NKID.

It belongs to the TRAFAC class translation factor GTPase superfamily. Classic translation factor GTPase family. LepA subfamily.

It is found in the cell inner membrane. It catalyses the reaction GTP + H2O = GDP + phosphate + H(+). Required for accurate and efficient protein synthesis under certain stress conditions. May act as a fidelity factor of the translation reaction, by catalyzing a one-codon backward translocation of tRNAs on improperly translocated ribosomes. Back-translocation proceeds from a post-translocation (POST) complex to a pre-translocation (PRE) complex, thus giving elongation factor G a second chance to translocate the tRNAs correctly. Binds to ribosomes in a GTP-dependent manner. This Xanthomonas euvesicatoria pv. vesicatoria (strain 85-10) (Xanthomonas campestris pv. vesicatoria) protein is Elongation factor 4.